The primary structure comprises 226 residues: IVGGVEAVPNSWPHQAALFIDDMYFCGGSLISPEWILTAAHCMDGAGFVDVVLGAHNIREDEATQVTIQSTDFTVHENYNSFVISNDIAVIRLPVPVTLTAAIATVGLPSTDVGVGTVVTPTGWGLPSDSALGISDVLRQVDVPIMSNADCDAVYGIVTDGNICIDSTGGKGTCNGDSGGPLNYNGLTYGITSFGAAAGCEAGYPDAFTRVTYFLDWIQTQTGITP.

Residues 1-223 (IVGGVEAVPN…FLDWIQTQTG (223 aa)) form the Peptidase S1 domain. A disulfide bridge links C26 with C42. Residues H41 and D87 each act as charge relay system in the active site. Disulfide bonds link C151-C164 and C174-C200. The active-site Charge relay system is the S178.

This sequence belongs to the peptidase S1 family.

The enzyme catalyses Hydrolysis of proteins, with broad specificity for peptide bonds. Native collagen is cleaved about 75% of the length of the molecule from the N-terminus. Low activity on small molecule substrates of both trypsin and chymotrypsin.. In terms of biological role, this enzyme is a serine protease capable of degrading the native triple helix of collagen. This Leptuca pugilator (Atlantic sand fiddler crab) protein is Brachyurin.